We begin with the raw amino-acid sequence, 504 residues long: 26S proteasome non-ATPase regulatory subunit 3 (504 aa).

Residues 254 to 434 enclose the PCI domain; it reads ARYFYYQGRI…GYLQSRENID (181 aa). Residues 485 to 504 form a disordered region; sequence KEEMERQAEESSDNEGDSDF. Positions 494 to 504 are enriched in acidic residues; it reads ESSDNEGDSDF.

The protein belongs to the proteasome subunit S3 family. In terms of assembly, the 26S proteasome is composed of a core protease, known as the 20S proteasome, capped at one or both ends by the 19S regulatory complex (RC). The RC is composed of at least 18 different subunits in two subcomplexes, the base and the lid, which form the portions proximal and distal to the 20S proteolytic core, respectively.

Its function is as follows. Acts as a regulatory subunit of the 26 proteasome which is involved in the ATP-dependent degradation of ubiquitinated proteins. The sequence is that of 26S proteasome non-ATPase regulatory subunit 3 (psmD3) from Dictyostelium discoideum (Social amoeba).